A 142-amino-acid polypeptide reads, in one-letter code: Large ribosomal subunit protein uL13 (142 aa).

It belongs to the universal ribosomal protein uL13 family. As to quaternary structure, part of the 50S ribosomal subunit.

Functionally, this protein is one of the early assembly proteins of the 50S ribosomal subunit, although it is not seen to bind rRNA by itself. It is important during the early stages of 50S assembly. The sequence is that of Large ribosomal subunit protein uL13 from Pseudomonas fluorescens (strain Pf0-1).